Reading from the N-terminus, the 230-residue chain is UPF0502 protein Oter_3715 (230 aa).

It belongs to the UPF0502 family.

In Opitutus terrae (strain DSM 11246 / JCM 15787 / PB90-1), this protein is UPF0502 protein Oter_3715.